The primary structure comprises 195 residues: Capsid protein (195 aa).

Residues 148-195 (NAPILSTLPETTVVRRRGRSPRRRTPSPRRRRSQSPRRRRSASPASQC) form a disordered region. Residues 161–188 (VRRRGRSPRRRTPSPRRRRSQSPRRRRS) are compositionally biased toward basic residues. A phosphoserine; by host mark is found at serine 167, serine 174, and serine 182. The stretch at 167–172 (SPRRRT) is one 1; half-length repeat. The tract at residues 167 to 188 (SPRRRTPSPRRRRSQSPRRRRS) is 3 X 7 AA repeats of S-P-R-R-R-[PR]-S. The Bipartite nuclear localization signal signature appears at 170–187 (RRTPSPRRRRSQSPRRRR). 2 tandem repeats follow at residues 174–180 (SPRRRRS) and 182–188 (SPRRRRS). The tract at residues 189-195 (ASPASQC) is RNA binding.

The protein belongs to the orthohepadnavirus core antigen family. Homodimerizes, then multimerizes. Interacts with cytosol exposed regions of viral L glycoprotein present in the reticulum-to-Golgi compartment. Interacts with human FLNB. Phosphorylated form interacts with host importin alpha; this interaction depends on the exposure of the NLS, which itself depends upon genome maturation and/or phosphorylation of the capsid protein. Interacts with host NUP153. Phosphorylated by host SRPK1, SRPK2, and maybe protein kinase C or GAPDH. Phosphorylation is critical for pregenomic RNA packaging. Protein kinase C phosphorylation is stimulated by HBx protein and may play a role in transport of the viral genome to the nucleus at the late step during the viral replication cycle.

It localises to the virion. It is found in the host cytoplasm. Functionally, self assembles to form an icosahedral capsid. Most capsids appear to be large particles with an icosahedral symmetry of T=4 and consist of 240 copies of capsid protein, though a fraction forms smaller T=3 particles consisting of 180 capsid proteins. Entering capsids are transported along microtubules to the nucleus. Phosphorylation of the capsid is thought to induce exposure of nuclear localization signal in the C-terminal portion of the capsid protein that allows binding to the nuclear pore complex via the importin (karyopherin-) alpha and beta. Capsids are imported in intact form through the nuclear pore into the nuclear basket, where it probably binds NUP153. Only capsids that contain the mature viral genome can release the viral DNA and capsid protein into the nucleoplasm. Immature capsids get stuck in the basket. Capsids encapsulate the pre-genomic RNA and the P protein. Pre-genomic RNA is reverse-transcribed into DNA while the capsid is still in the cytoplasm. The capsid can then either be directed to the nucleus, providing more genomes for transcription, or bud through the endoplasmic reticulum to provide new virions. The chain is Capsid protein from Hepatitis B virus genotype G (isolate United States/USG17/2002) (HBV-G).